A 471-amino-acid chain; its full sequence is tRNA-2-methylthio-N(6)-dimethylallyladenosine synthase (471 aa).

In terms of domain architecture, MTTase N-terminal spans 31–149 (LYYHIETYGC…FPQLLWEALN (119 aa)). Residues Cys40, Cys76, Cys110, Cys186, Cys190, and Cys193 each contribute to the [4Fe-4S] cluster site. In terms of domain architecture, Radical SAM core spans 172–402 (RDSNLKAWVN…IELQNKISLE (231 aa)). The 64-residue stretch at 405–468 (AELRGKIVEV…AWTMQGELVE (64 aa)) folds into the TRAM domain.

The protein belongs to the methylthiotransferase family. MiaB subfamily. In terms of assembly, monomer. Requires [4Fe-4S] cluster as cofactor.

Its subcellular location is the cytoplasm. The catalysed reaction is N(6)-dimethylallyladenosine(37) in tRNA + (sulfur carrier)-SH + AH2 + 2 S-adenosyl-L-methionine = 2-methylsulfanyl-N(6)-dimethylallyladenosine(37) in tRNA + (sulfur carrier)-H + 5'-deoxyadenosine + L-methionine + A + S-adenosyl-L-homocysteine + 2 H(+). Catalyzes the methylthiolation of N6-(dimethylallyl)adenosine (i(6)A), leading to the formation of 2-methylthio-N6-(dimethylallyl)adenosine (ms(2)i(6)A) at position 37 in tRNAs that read codons beginning with uridine. The sequence is that of tRNA-2-methylthio-N(6)-dimethylallyladenosine synthase from Thermoanaerobacter pseudethanolicus (strain ATCC 33223 / 39E) (Clostridium thermohydrosulfuricum).